A 106-amino-acid chain; its full sequence is MMKVLVVVALLVTLISYSSSEGIGDLEADELLSLMANEQTRAKACTPRYYDCSHDRHSCCRSSMFKDVCTCFYPEGGDNKEVCTCQQPKHLKYMEKATDKIKNLFG.

Residues 1-20 (MMKVLVVVALLVTLISYSSS) form the signal peptide. A propeptide spanning residues 21–41 (EGIGDLEADELLSLMANEQTR) is cleaved from the precursor. 4 disulfides stabilise this stretch: cysteine 45–cysteine 60, cysteine 52–cysteine 69, cysteine 59–cysteine 85, and cysteine 71–cysteine 83.

This sequence belongs to the neurotoxin 19 (CSTX) family. 02 (D7) subfamily. Expressed by the venom gland.

Its subcellular location is the secreted. The chain is Toxin-like structure LSTX-D4 from Lycosa singoriensis (Wolf spider).